Here is a 1070-residue protein sequence, read N- to C-terminus: Isoleucine--tRNA ligase (1070 aa).

Positions 50–60 (PYTSGAAHMGT) match the 'HIGH' region motif. Residues 606–610 (GMSKS) carry the 'KMSKS' region motif. Lys-609 contributes to the ATP binding site.

This sequence belongs to the class-I aminoacyl-tRNA synthetase family. IleS type 2 subfamily. As to quaternary structure, monomer. Zn(2+) serves as cofactor.

The protein localises to the cytoplasm. The catalysed reaction is tRNA(Ile) + L-isoleucine + ATP = L-isoleucyl-tRNA(Ile) + AMP + diphosphate. Functionally, catalyzes the attachment of isoleucine to tRNA(Ile). As IleRS can inadvertently accommodate and process structurally similar amino acids such as valine, to avoid such errors it has two additional distinct tRNA(Ile)-dependent editing activities. One activity is designated as 'pretransfer' editing and involves the hydrolysis of activated Val-AMP. The other activity is designated 'posttransfer' editing and involves deacylation of mischarged Val-tRNA(Ile). This Halobacterium salinarum (strain ATCC 700922 / JCM 11081 / NRC-1) (Halobacterium halobium) protein is Isoleucine--tRNA ligase.